The primary structure comprises 486 residues: Protein DETOXIFICATION 27 (486 aa).

Residues 1–25 (MRGGDGEEGSESRVALLKSPHTAEE) form a disordered region. The next 12 helical transmembrane spans lie at 41–61 (LWQI…MLVI), 74–94 (LAAI…LLLG), 124–144 (IVLF…TPVL), 153–173 (IAEL…AFTL), 189–209 (VTAY…WLFV), 216–236 (VVGT…ILLV), 269–289 (GVML…TGNL), 299–319 (LSIC…FFAG), 349–369 (IIGL…AWIF), 384–404 (LLLA…GVAV), 407–427 (GWQS…GVPL), and 439–461 (VMGI…LSFI).

Belongs to the multi antimicrobial extrusion (MATE) (TC 2.A.66.1) family.

The protein localises to the membrane. This chain is Protein DETOXIFICATION 27, found in Arabidopsis thaliana (Mouse-ear cress).